Consider the following 886-residue polypeptide: Chitin synthase 3 (886 aa).

2 disordered regions span residues methionine 1 to aspartate 70 and proline 86 to glycine 138. The segment covering leucine 7–glutamine 17 has biased composition (basic and acidic residues). A compositionally biased stretch (polar residues) spans proline 37–serine 56. N-linked (GlcNAc...) asparagine glycosylation occurs at asparagine 51. Positions tyrosine 106–alanine 122 are enriched in basic and acidic residues. N-linked (GlcNAc...) asparagine glycosylation is present at asparagine 196. 7 helical membrane-spanning segments follow: residues serine 428–leucine 448, arginine 526–phenylalanine 546, valine 556–valine 576, isoleucine 602–serine 622, methionine 637–valine 657, threonine 683–phenylalanine 703, and phenylalanine 712–cysteine 732. A disordered region spans residues aspartate 745–serine 768. Transmembrane regions (helical) follow at residues valine 813–leucine 833 and valine 858–leucine 878.

Belongs to the chitin synthase family. Class I subfamily.

Its subcellular location is the cell membrane. It carries out the reaction [(1-&gt;4)-N-acetyl-beta-D-glucosaminyl](n) + UDP-N-acetyl-alpha-D-glucosamine = [(1-&gt;4)-N-acetyl-beta-D-glucosaminyl](n+1) + UDP + H(+). Its function is as follows. Polymerizes chitin, a structural polymer of the cell wall and septum, by transferring the sugar moiety of UDP-GlcNAc to the non-reducing end of the growing chitin polymer. Involved in tolerance to hyperosmotic conditions. CHS3 is the only V.dahliae chitin synthase that is not involved in virulence. The protein is Chitin synthase 3 of Verticillium dahliae (strain VdLs.17 / ATCC MYA-4575 / FGSC 10137) (Verticillium wilt).